An 879-amino-acid polypeptide reads, in one-letter code: Alanine--tRNA ligase (879 aa).

Zn(2+) contacts are provided by His566, His570, Cys668, and His672.

The protein belongs to the class-II aminoacyl-tRNA synthetase family. Zn(2+) is required as a cofactor.

The protein resides in the cytoplasm. It catalyses the reaction tRNA(Ala) + L-alanine + ATP = L-alanyl-tRNA(Ala) + AMP + diphosphate. Catalyzes the attachment of alanine to tRNA(Ala) in a two-step reaction: alanine is first activated by ATP to form Ala-AMP and then transferred to the acceptor end of tRNA(Ala). Also edits incorrectly charged Ser-tRNA(Ala) and Gly-tRNA(Ala) via its editing domain. This is Alanine--tRNA ligase from Listeria monocytogenes serovar 1/2a (strain ATCC BAA-679 / EGD-e).